Here is a 375-residue protein sequence, read N- to C-terminus: Dual-specificity RNA methyltransferase RlmN (375 aa).

The Proton acceptor role is filled by E93. The region spanning 99–346 (ETNRGTLCVS…TTTRKTRGDD (248 aa)) is the Radical SAM core domain. A disulfide bridge connects residues C106 and C351. C113, C117, and C120 together coordinate [4Fe-4S] cluster. Residues 177 to 178 (GE), S209, 231 to 233 (SLH), and N308 contribute to the S-adenosyl-L-methionine site. C351 functions as the S-methylcysteine intermediate in the catalytic mechanism.

It belongs to the radical SAM superfamily. RlmN family. The cofactor is [4Fe-4S] cluster.

It localises to the cytoplasm. The catalysed reaction is adenosine(2503) in 23S rRNA + 2 reduced [2Fe-2S]-[ferredoxin] + 2 S-adenosyl-L-methionine = 2-methyladenosine(2503) in 23S rRNA + 5'-deoxyadenosine + L-methionine + 2 oxidized [2Fe-2S]-[ferredoxin] + S-adenosyl-L-homocysteine. It carries out the reaction adenosine(37) in tRNA + 2 reduced [2Fe-2S]-[ferredoxin] + 2 S-adenosyl-L-methionine = 2-methyladenosine(37) in tRNA + 5'-deoxyadenosine + L-methionine + 2 oxidized [2Fe-2S]-[ferredoxin] + S-adenosyl-L-homocysteine. Its function is as follows. Specifically methylates position 2 of adenine 2503 in 23S rRNA and position 2 of adenine 37 in tRNAs. m2A2503 modification seems to play a crucial role in the proofreading step occurring at the peptidyl transferase center and thus would serve to optimize ribosomal fidelity. This chain is Dual-specificity RNA methyltransferase RlmN, found in Azoarcus sp. (strain BH72).